A 197-amino-acid chain; its full sequence is C4-dicarboxylate transport transcriptional regulatory protein DctR (197 aa).

Positions 4–120 (TVHIVDDEES…HIVDIALSAI (117 aa)) constitute a Response regulatory domain. Aspartate 53 carries the 4-aspartylphosphate modification. An inter-domain linker region spans residues 128–135 (AEAQAREA). One can recognise an HTH luxR-type domain in the interval 136–197 (VAARRASLSA…RNIADLARMT (62 aa)). The H-T-H motif DNA-binding region spans 160–179 (NKQIAERLGIAMRTVEVHRS).

Phosphorylated by DctS.

The protein localises to the cytoplasm. Its function is as follows. Member of the two-component regulatory system DctS/DctR involved in the transport of C4-dicarboxylates. DctR functions as a transcriptional repressor of genes for C4-dicarboxylate transport. This is C4-dicarboxylate transport transcriptional regulatory protein DctR (dctR) from Rhodobacter capsulatus (Rhodopseudomonas capsulata).